The following is a 120-amino-acid chain: Response regulator receiver protein CpdR (120 aa).

In terms of domain architecture, Response regulatory spans 3–117 (RILLAEDDND…DLVNEIEKML (115 aa)). A 4-aspartylphosphate modification is found at aspartate 52.

Post-translationally, is phosphorylated by ChpT-P on Asp-52.

Its subcellular location is the cytoplasm. Functionally, component of a regulatory phosphorelay system that controls B.abortus cell growth, division, and intracellular survival inside mammalian host cells. This signaling pathway is composed of CckA, ChpT, CtrA and CpdR. CpdR is a response regulator substrate of ChpT. Unphosphorylated CpdR controls steady-state levels of CtrA in the B.abortus cell, likely via CtrA destabilization and activation of its proteolysis. The polypeptide is Response regulator receiver protein CpdR (Brucella abortus (strain 2308)).